An 85-amino-acid polypeptide reads, in one-letter code: U4-theraphotoxin-Hhn1u (85 aa).

A signal peptide spans 1–22; sequence MKMTLIAILTCAAVLVLHTTAA. The propeptide occupies 23–48; that stretch reads EELEAESQLMEVGMPDTELEAVDEER. 3 cysteine pairs are disulfide-bonded: Cys-52/Cys-66, Cys-56/Cys-77, and Cys-71/Cys-82.

The protein belongs to the neurotoxin 12 (Hwtx-2) family. 02 (Hwtx-2) subfamily. Expressed by the venom gland.

Its subcellular location is the secreted. Its function is as follows. Postsynaptic neurotoxin. The polypeptide is U4-theraphotoxin-Hhn1u (Cyriopagopus hainanus (Chinese bird spider)).